The following is a 219-amino-acid chain: Oxaloacetate tautomerase YcgM (219 aa).

Mg(2+) is bound by residues glutamate 70, glutamate 72, and aspartate 101.

Belongs to the FAH family. The cofactor is a divalent metal cation.

It carries out the reaction oxaloacetate = enol-oxaloacetate. Functionally, tautomerase that converts enol-oxaloacetate to the keto form of oxaloacetate. This Escherichia coli (strain K12) protein is Oxaloacetate tautomerase YcgM.